Reading from the N-terminus, the 272-residue chain is Protein SSO0103 (272 aa).

It belongs to the CinA family.

This chain is Protein SSO0103, found in Saccharolobus solfataricus (strain ATCC 35092 / DSM 1617 / JCM 11322 / P2) (Sulfolobus solfataricus).